The chain runs to 335 residues: Glyceraldehyde-3-phosphate dehydrogenase (335 aa).

NAD(+) is bound by residues 12 to 13 (RI), aspartate 34, arginine 78, and serine 120. D-glyceraldehyde 3-phosphate-binding positions include 151–153 (SCT) and threonine 182. Cysteine 152 functions as the Nucleophile in the catalytic mechanism. Asparagine 183 is a binding site for NAD(+). Residues arginine 197, 210-211 (TG), and arginine 233 each bind D-glyceraldehyde 3-phosphate. An NAD(+)-binding site is contributed by asparagine 315.

This sequence belongs to the glyceraldehyde-3-phosphate dehydrogenase family. Homotetramer.

The protein resides in the cytoplasm. The catalysed reaction is D-glyceraldehyde 3-phosphate + phosphate + NAD(+) = (2R)-3-phospho-glyceroyl phosphate + NADH + H(+). It participates in carbohydrate degradation; glycolysis; pyruvate from D-glyceraldehyde 3-phosphate: step 1/5. Functionally, catalyzes the oxidative phosphorylation of glyceraldehyde 3-phosphate (G3P) to 1,3-bisphosphoglycerate (BPG) using the cofactor NAD. The first reaction step involves the formation of a hemiacetal intermediate between G3P and a cysteine residue, and this hemiacetal intermediate is then oxidized to a thioester, with concomitant reduction of NAD to NADH. The reduced NADH is then exchanged with the second NAD, and the thioester is attacked by a nucleophilic inorganic phosphate to produce BPG. The chain is Glyceraldehyde-3-phosphate dehydrogenase (gap) from Priestia megaterium (strain DSM 319 / IMG 1521) (Bacillus megaterium).